Consider the following 445-residue polypeptide: Phosphoglucosamine mutase (445 aa).

Ser99 functions as the Phosphoserine intermediate in the catalytic mechanism. Mg(2+) contacts are provided by Ser99, Asp242, Asp244, and Asp246. The residue at position 99 (Ser99) is a Phosphoserine.

Belongs to the phosphohexose mutase family. Mg(2+) serves as cofactor. In terms of processing, activated by phosphorylation.

It catalyses the reaction alpha-D-glucosamine 1-phosphate = D-glucosamine 6-phosphate. Functionally, catalyzes the conversion of glucosamine-6-phosphate to glucosamine-1-phosphate. This is Phosphoglucosamine mutase from Helicobacter pylori (strain Shi470).